The following is a 160-amino-acid chain: Transcription elongation factor GreA (160 aa).

Residues 49 to 73 (HAAKEEQSHNEGRIADLEDKLARAD) are a coiled coil.

The protein belongs to the GreA/GreB family.

Necessary for efficient RNA polymerase transcription elongation past template-encoded arresting sites. The arresting sites in DNA have the property of trapping a certain fraction of elongating RNA polymerases that pass through, resulting in locked ternary complexes. Cleavage of the nascent transcript by cleavage factors such as GreA or GreB allows the resumption of elongation from the new 3'terminus. GreA releases sequences of 2 to 3 nucleotides. The polypeptide is Transcription elongation factor GreA (Rhodopseudomonas palustris (strain BisA53)).